A 74-amino-acid polypeptide reads, in one-letter code: Histone H1.C8/H1.M1 (74 aa).

Residues 1–74 (MSDAAVPPKK…KAVKKAPKKK (74 aa)) are disordered. Over residues 11-74 (ASPKKAAAKK…KAVKKAPKKK (64 aa)) the composition is skewed to basic residues.

The protein localises to the nucleus. It is found in the chromosome. This chain is Histone H1.C8/H1.M1, found in Trypanosoma cruzi.